The primary structure comprises 186 residues: Nucleoside triphosphate pyrophosphatase (186 aa).

The Proton acceptor role is filled by D68.

The protein belongs to the Maf family. It depends on a divalent metal cation as a cofactor.

It localises to the cytoplasm. The catalysed reaction is a ribonucleoside 5'-triphosphate + H2O = a ribonucleoside 5'-phosphate + diphosphate + H(+). The enzyme catalyses a 2'-deoxyribonucleoside 5'-triphosphate + H2O = a 2'-deoxyribonucleoside 5'-phosphate + diphosphate + H(+). Nucleoside triphosphate pyrophosphatase. May have a dual role in cell division arrest and in preventing the incorporation of modified nucleotides into cellular nucleic acids. The sequence is that of Nucleoside triphosphate pyrophosphatase from Prochlorococcus marinus (strain MIT 9303).